The sequence spans 211 residues: High mobility group protein B1-like 1 (211 aa).

7 positions are modified to N6-acetyllysine: lysine 3, lysine 7, lysine 8, lysine 12, lysine 28, lysine 29, and lysine 30. The HMG box 1 DNA-binding region spans 9-79; the sequence is PRGKMSSYAF…HYERQMKTYI (71 aa). The segment at 71-96 is disordered; it reads YERQMKTYIPPKGETKKKFKDPNAPK. Residues 83–94 are compositionally biased toward basic and acidic residues; that stretch reads GETKKKFKDPNA. A DNA-binding region (HMG box 2) is located at residues 95 to 163; the sequence is PKRPPSAFFL…KYEKDIAAYQ (69 aa). Residues lysine 127, lysine 128, lysine 172, lysine 173, lysine 177, lysine 180, lysine 182, lysine 183, lysine 184, and lysine 185 each carry the N6-acetyllysine modification. The disordered stretch occupies residues 161-211; sequence AYQAKGKPEAAKKGVVKAEKSKKKKEEEEDEEDEEDEEEEDEEDEEDDDDE. The segment covering 166 to 179 has biased composition (basic and acidic residues); sequence GKPEAAKKGVVKAE. Positions 187-211 are enriched in acidic residues; the sequence is EEEDEEDEEDEEEEDEEDEEDDDDE.

It belongs to the HMGB family.

It is found in the nucleus. It localises to the chromosome. In terms of biological role, binds preferentially single-stranded DNA and unwinds double-stranded DNA. In Homo sapiens (Human), this protein is High mobility group protein B1-like 1 (HMGB1P1).